The following is a 163-amino-acid chain: Arginine repressor (163 aa).

This sequence belongs to the ArgR family.

It is found in the cytoplasm. It functions in the pathway amino-acid biosynthesis; L-arginine biosynthesis [regulation]. In terms of biological role, regulates arginine biosynthesis genes. This Corynebacterium diphtheriae (strain ATCC 700971 / NCTC 13129 / Biotype gravis) protein is Arginine repressor.